A 275-amino-acid chain; its full sequence is Large ribosomal subunit protein uL2 (275 aa).

Disordered stretches follow at residues 38–59 and 223–275; these read TRGS…GGHK and VAMN…RKRK. Positions 50 to 59 are enriched in basic residues; sequence TVRHRGGGHK. Residues 229 to 244 are compositionally biased toward basic and acidic residues; sequence DHPHGGGEGRTGEARE.

It belongs to the universal ribosomal protein uL2 family. Part of the 50S ribosomal subunit. Forms a bridge to the 30S subunit in the 70S ribosome.

In terms of biological role, one of the primary rRNA binding proteins. Required for association of the 30S and 50S subunits to form the 70S ribosome, for tRNA binding and peptide bond formation. It has been suggested to have peptidyltransferase activity; this is somewhat controversial. Makes several contacts with the 16S rRNA in the 70S ribosome. The polypeptide is Large ribosomal subunit protein uL2 (Bordetella bronchiseptica (strain ATCC BAA-588 / NCTC 13252 / RB50) (Alcaligenes bronchisepticus)).